Reading from the N-terminus, the 76-residue chain is MGSFSIWHWLVVLAIVVLVFGTKKLRNLGSDLGGAVRGFKEGMKGAEEESTPPPPAQQVTGHSIKSEIEEKDQTKV.

A helical transmembrane segment spans residues 1–21 (MGSFSIWHWLVVLAIVVLVFG). The interval 41-76 (EGMKGAEEESTPPPPAQQVTGHSIKSEIEEKDQTKV) is disordered. A compositionally biased stretch (basic and acidic residues) spans 64-76 (IKSEIEEKDQTKV).

The protein belongs to the TatA/E family. As to quaternary structure, the Tat system comprises two distinct complexes: a TatABC complex, containing multiple copies of TatA, TatB and TatC subunits, and a separate TatA complex, containing only TatA subunits. Substrates initially bind to the TatABC complex, which probably triggers association of the separate TatA complex to form the active translocon.

Its subcellular location is the cell inner membrane. Its function is as follows. Part of the twin-arginine translocation (Tat) system that transports large folded proteins containing a characteristic twin-arginine motif in their signal peptide across membranes. TatA could form the protein-conducting channel of the Tat system. The protein is Sec-independent protein translocase protein TatA of Nitrosomonas europaea (strain ATCC 19718 / CIP 103999 / KCTC 2705 / NBRC 14298).